Consider the following 215-residue polypeptide: Cytochrome b6 (215 aa).

The chain crosses the membrane as a helical span at residues 32 to 52 (IFYCLGGITLTCFLVQVATGF). Cysteine 35 lines the heme c pocket. Histidine 86 and histidine 100 together coordinate heme b. Transmembrane regions (helical) follow at residues 90-110 (ASMM…TGGF), 116-136 (LTWV…VTGY), and 186-206 (LHTF…FLMI). Residues histidine 187 and histidine 202 each contribute to the heme b site.

This sequence belongs to the cytochrome b family. PetB subfamily. As to quaternary structure, the 4 large subunits of the cytochrome b6-f complex are cytochrome b6, subunit IV (17 kDa polypeptide, PetD), cytochrome f and the Rieske protein, while the 4 small subunits are PetG, PetL, PetM and PetN. The complex functions as a dimer. Requires heme b as cofactor. The cofactor is heme c.

The protein localises to the plastid. It localises to the chloroplast thylakoid membrane. Its function is as follows. Component of the cytochrome b6-f complex, which mediates electron transfer between photosystem II (PSII) and photosystem I (PSI), cyclic electron flow around PSI, and state transitions. The polypeptide is Cytochrome b6 (Pinus thunbergii (Japanese black pine)).